Consider the following 851-residue polypeptide: DNA mismatch repair protein MutS (851 aa).

614–621 is a binding site for ATP; that stretch reads GPNMGGKS.

This sequence belongs to the DNA mismatch repair MutS family.

In terms of biological role, this protein is involved in the repair of mismatches in DNA. It is possible that it carries out the mismatch recognition step. This protein has a weak ATPase activity. This is DNA mismatch repair protein MutS from Yersinia pestis.